The following is a 417-amino-acid chain: UPF0597 protein FMG_0209 (417 aa).

This sequence belongs to the UPF0597 family.

The protein is UPF0597 protein FMG_0209 of Finegoldia magna (strain ATCC 29328 / DSM 20472 / WAL 2508) (Peptostreptococcus magnus).